The sequence spans 186 residues: UPF0301 protein CV_3909 (186 aa).

It belongs to the UPF0301 (AlgH) family.

The protein is UPF0301 protein CV_3909 of Chromobacterium violaceum (strain ATCC 12472 / DSM 30191 / JCM 1249 / CCUG 213 / NBRC 12614 / NCIMB 9131 / NCTC 9757 / MK).